The chain runs to 593 residues: Salivary alpha-glucosidase (593 aa).

An N-terminal signal peptide occupies residues 1–19 (MPPLGVLLLLVALGHSTQG). Ca(2+)-binding residues include Asp-49, Asp-51, Asp-53, Ile-55, Asp-57, and Asn-130. Residues Asn-130 and Asn-163 are each glycosylated (N-linked (GlcNAc...) asparagine). Ca(2+) is bound by residues Asp-201, Tyr-235, Leu-236, and Glu-238. Residues Asn-295, Asn-310, Asn-338, Asn-414, Asn-445, and Asn-453 are each glycosylated (N-linked (GlcNAc...) asparagine). Residue Asn-338 coordinates N-acetyl-beta-D-glucosamine.

The protein belongs to the glycosyl hydrolase 13 family. As to expression, saliva (at protein level). Proximal lateral lobes of the salivary gland (at protein level).

It localises to the secreted. It carries out the reaction Hydrolysis of terminal, non-reducing (1-&gt;4)-linked alpha-D-glucose residues with release of alpha-D-glucose.. In terms of biological role, functions as a glucosidase that shows high activity toward sucrose, a major component of nectar. Assists the mosquito in its sugar-feeding capabilities. This chain is Salivary alpha-glucosidase, found in Anopheles gambiae (African malaria mosquito).